Here is a 120-residue protein sequence, read N- to C-terminus: NAD(P)H-quinone oxidoreductase subunit 3, chloroplastic (120 aa).

The next 3 membrane-spanning stretches (helical) occupy residues 9-29 (IFWAFLIISSIIPILAFLISG), 64-84 (MFALVFVVFDVETVFLYPWAM), and 88-108 (VLGVSVFIEALIFVLIPIVGL).

It belongs to the complex I subunit 3 family. In terms of assembly, NDH is composed of at least 16 different subunits, 5 of which are encoded in the nucleus.

The protein localises to the plastid. It is found in the chloroplast thylakoid membrane. It catalyses the reaction a plastoquinone + NADH + (n+1) H(+)(in) = a plastoquinol + NAD(+) + n H(+)(out). The enzyme catalyses a plastoquinone + NADPH + (n+1) H(+)(in) = a plastoquinol + NADP(+) + n H(+)(out). NDH shuttles electrons from NAD(P)H:plastoquinone, via FMN and iron-sulfur (Fe-S) centers, to quinones in the photosynthetic chain and possibly in a chloroplast respiratory chain. The immediate electron acceptor for the enzyme in this species is believed to be plastoquinone. Couples the redox reaction to proton translocation, and thus conserves the redox energy in a proton gradient. The sequence is that of NAD(P)H-quinone oxidoreductase subunit 3, chloroplastic from Ceratophyllum demersum (Rigid hornwort).